Consider the following 131-residue polypeptide: MAAPRGRPKKDLTMEDLTAKISQLTVENRELRKALGSTADPRDRPLTATEKEAQLTATVGALSAAAAKKIEARVRTIFSKVVTQKQVDDALKGLSLRIDVCMSDGGTAKPPPGANNRRRRGASTTRAGVDD.

A disordered region spans residues 103–131; it reads SDGGTAKPPPGANNRRRRGASTTRAGVDD. Residues 122–131 are compositionally biased toward low complexity; sequence ASTTRAGVDD. S123 carries the phosphoserine; by host modification.

This sequence belongs to the herpesviridae BLRF2 family. Homooligomer; homooligomerizes and binds double-stranded DNA (dsDNA) cooperatively. Interacts with host CGAS. Interacts with PQBP1.

It is found in the host cytoplasm. The protein localises to the virion tegument. In terms of biological role, plays a role in the inhibition of host innate immune system by targeting the CGAS enzymatic activity which is the principal cytosolic DNA sensor that detects invading viral DNA. Acts by inhibiting CGAS-DNA phase separation: directly binds double-stranded DNA (dsDNA) in a length dependent but sequence independent manner and is able to form DNA-induced phase separation in infected cells. DNA phase separation of ORF52 mediates disruption of liquid-like droplets in which CGAS is activated, thereby preventing CGAS activity. Targets also the HDP-RNP complex composed of DNA-PK subunits and paraspeckle proteins. This complex is a key nuclear regulator of DNA-mediated activation of innate immune response through the cGAS-STING pathway. The protein is Tegument protein ORF52 of Homo sapiens (Human).